Consider the following 272-residue polypeptide: Phosphoglycolate phosphatase (272 aa).

The active-site Nucleophile is the Asp-19. Mg(2+) contacts are provided by Asp-19, Asp-21, and Asp-182.

The protein belongs to the HAD-like hydrolase superfamily. CbbY/CbbZ/Gph/YieH family. It depends on Mg(2+) as a cofactor.

It catalyses the reaction 2-phosphoglycolate + H2O = glycolate + phosphate. It functions in the pathway organic acid metabolism; glycolate biosynthesis; glycolate from 2-phosphoglycolate: step 1/1. In terms of biological role, specifically catalyzes the dephosphorylation of 2-phosphoglycolate. Is involved in the dissimilation of the intracellular 2-phosphoglycolate formed during the DNA repair of 3'-phosphoglycolate ends, a major class of DNA lesions induced by oxidative stress. The chain is Phosphoglycolate phosphatase from Pseudomonas syringae pv. syringae (strain B728a).